Here is a 463-residue protein sequence, read N- to C-terminus: 6-phosphofructo-2-kinase/fructose-2,6-bisphosphatase 3 (463 aa).

The segment at 1–246 (MPLELTQSRV…VYYLMNIHWQ (246 aa)) is 6-phosphofructo-2-kinase. Position 42 to 50 (42 to 50 (GLPARGKTY)) interacts with ATP. The beta-D-fructose 6-phosphate site is built by R75 and R99. D125 is an active-site residue. Residues T127 and R133 each coordinate beta-D-fructose 6-phosphate. Residue C155 is part of the active site. 164 to 169 (NIMEVK) contributes to the ATP binding site. Positions 169, 191, and 195 each coordinate beta-D-fructose 6-phosphate. Residues 247–463 (PRTIYLCRHG…PNPLMRSNSH (217 aa)) form a fructose-2,6-bisphosphatase region. Residue R254 participates in beta-D-fructose 2,6-bisphosphate binding. Catalysis depends on H255, which acts as the Tele-phosphohistidine intermediate. Beta-D-fructose 2,6-bisphosphate-binding residues include N261 and G267. E324 acts as the Proton donor/acceptor in catalysis. A beta-D-fructose 2,6-bisphosphate-binding site is contributed by Y335. 346 to 349 (YALA) contributes to the ATP binding site. Beta-D-fructose 2,6-bisphosphate is bound by residues K353, Y364, and Q390. Residues 390–394 (QAVCV) and Y426 each bind ATP. The disordered stretch occupies residues 444 to 463 (RERSEDAKKGPNPLMRSNSH). The residue at position 462 (S462) is a Phosphoserine; by AMPK and PKA.

In the C-terminal section; belongs to the phosphoglycerate mutase family. As to quaternary structure, homodimer. Forms a heterodimer with PFKFB2. Post-translationally, phosphorylation by AMPK stimulates activity. As to expression, brain.

The catalysed reaction is beta-D-fructose 2,6-bisphosphate + H2O = beta-D-fructose 6-phosphate + phosphate. It carries out the reaction beta-D-fructose 6-phosphate + ATP = beta-D-fructose 2,6-bisphosphate + ADP + H(+). In terms of biological role, catalyzes both the synthesis and degradation of fructose 2,6-bisphosphate. This is 6-phosphofructo-2-kinase/fructose-2,6-bisphosphatase 3 (PFKFB3) from Bos taurus (Bovine).